The chain runs to 234 residues: Purine nucleoside phosphorylase DeoD-type (234 aa).

His4 is a binding site for a purine D-ribonucleoside. Phosphate contacts are provided by residues Gly20, Arg24, Arg43, and 87–90 (RVGT). Residues Glu162, 178 to 180 (EME), and 202 to 203 (SD) each bind a purine D-ribonucleoside. Asp203 acts as the Proton donor in catalysis.

Belongs to the PNP/UDP phosphorylase family. As to quaternary structure, homohexamer; trimer of homodimers.

The catalysed reaction is a purine D-ribonucleoside + phosphate = a purine nucleobase + alpha-D-ribose 1-phosphate. It catalyses the reaction a purine 2'-deoxy-D-ribonucleoside + phosphate = a purine nucleobase + 2-deoxy-alpha-D-ribose 1-phosphate. In terms of biological role, catalyzes the reversible phosphorolytic breakdown of the N-glycosidic bond in the beta-(deoxy)ribonucleoside molecules, with the formation of the corresponding free purine bases and pentose-1-phosphate. Functionally, cleavage of adenosine and its derivatives. The sequence is that of Purine nucleoside phosphorylase DeoD-type from Geobacillus stearothermophilus (Bacillus stearothermophilus).